We begin with the raw amino-acid sequence, 1053 residues long: uncharacterized protein (1053 aa).

The protein belongs to the mycobacterial PPE family.

This is an uncharacterized protein from Mycobacterium tuberculosis (strain ATCC 25618 / H37Rv).